The primary structure comprises 208 residues: Uracil phosphoribosyltransferase (208 aa).

5-phospho-alpha-D-ribose 1-diphosphate is bound by residues R78, R103, and 130-138 (DPMLATGGS). Residues I193 and 198-200 (GDA) contribute to the uracil site. D199 contacts 5-phospho-alpha-D-ribose 1-diphosphate.

This sequence belongs to the UPRTase family. Requires Mg(2+) as cofactor.

It carries out the reaction UMP + diphosphate = 5-phospho-alpha-D-ribose 1-diphosphate + uracil. Its pathway is pyrimidine metabolism; UMP biosynthesis via salvage pathway; UMP from uracil: step 1/1. Allosterically activated by GTP. Catalyzes the conversion of uracil and 5-phospho-alpha-D-ribose 1-diphosphate (PRPP) to UMP and diphosphate. In Pasteurella multocida (strain Pm70), this protein is Uracil phosphoribosyltransferase.